Here is a 568-residue protein sequence, read N- to C-terminus: PTS system lactose-specific EIICB component (568 aa).

Residues 7 to 409 (LIEKGKPFFE…VVDTIIYYPF (403 aa)) form the PTS EIIC type-3 domain. Transmembrane regions (helical) follow at residues 30-50 (GFIA…IAYV), 62-82 (IETF…FFVG), 103-123 (INFL…AAEP), 128-148 (GFLT…AAFV), 183-203 (FTVS…TLGV), 222-242 (GYLG…VGIH), 283-303 (FIAT…FMWI), 339-359 (IFFV…KFFV), and 389-409 (VLSF…YYPF). The 103-residue stretch at 466 to 568 (ETNVLVLCAG…ALAFVQQQFD (103 aa)) folds into the PTS EIIB type-3 domain. Cys473 functions as the Phosphocysteine intermediate; for EIIB activity in the catalytic mechanism. Position 473 is a phosphocysteine; by EIIA (Cys473).

It is found in the cell membrane. The catalysed reaction is lactose(out) + N(pros)-phospho-L-histidyl-[protein] = lactose 6-phosphate(in) + L-histidyl-[protein]. Functionally, the phosphoenolpyruvate-dependent sugar phosphotransferase system (sugar PTS), a major carbohydrate active transport system, catalyzes the phosphorylation of incoming sugar substrates concomitantly with their translocation across the cell membrane. The enzyme II LacEF PTS system is involved in lactose transport. The chain is PTS system lactose-specific EIICB component from Lactococcus lactis subsp. lactis (Streptococcus lactis).